Reading from the N-terminus, the 511-residue chain is Glucans biosynthesis protein G (511 aa).

A signal peptide spans 1 to 22 (MMKMRWLSAAVMLTLYTSSSWA).

The protein belongs to the OpgD/OpgG family.

It is found in the periplasm. Its pathway is glycan metabolism; osmoregulated periplasmic glucan (OPG) biosynthesis. Its function is as follows. Involved in the biosynthesis of osmoregulated periplasmic glucans (OPGs). The chain is Glucans biosynthesis protein G from Escherichia coli O81 (strain ED1a).